A 170-amino-acid chain; its full sequence is Peptidyl-prolyl cis-trans isomerase ESS1 (170 aa).

The 35-residue stretch at 9-43 folds into the WW domain; sequence TGLPTPWTVRYSKSKKREYFFNPETKHSQWEEPEG. A disordered region spans residues 30-53; the sequence is NPETKHSQWEEPEGTNKDQLHKHL. Over residues 32–53 the composition is skewed to basic and acidic residues; sequence ETKHSQWEEPEGTNKDQLHKHL. Residues 57-170 enclose the PpiC domain; that stretch reads PVRVRCLHIL…SGVHVIKRVG (114 aa). A Phosphoserine modification is found at serine 161.

It belongs to the PpiC/parvulin rotamase family. As to quaternary structure, interacts with the RNA polymerase II largest subunit (RPB1) and with the SIN1-RDP3 HDAC subunit SIN3.

Its subcellular location is the cytoplasm. The protein resides in the nucleus. The enzyme catalyses [protein]-peptidylproline (omega=180) = [protein]-peptidylproline (omega=0). With respect to regulation, inhibited by 5-hydroxy-1,4-naphthoquinone (juglone), but not by FK506 or cyclosporin A. Essential PPIase specific for phosphoserine and phosphothreonine N-terminal to the proline residue. Required for efficient pre-mRNA 3'-end processing and transcription termination, probably by inducing conformational changes by proline-directed isomerization in the C-terminal domain (CTD) of RPB1, thereby altering cofactor binding with the RNA polymerase II transcription complex. Also targets the SIN3-RPD3 histone deacetylase complex (HDAC). In Saccharomyces cerevisiae (strain ATCC 204508 / S288c) (Baker's yeast), this protein is Peptidyl-prolyl cis-trans isomerase ESS1 (ESS1).